Consider the following 709-residue polypeptide: Dibasic-processing endoprotease (709 aa).

Positions 1 to 22 (MHPALLCGPILAIFLQFLVSSC) are cleaved as a signal peptide. 2 consecutive propeptides follow at residues 23–82 (SPLE…IRKR) and 83–102 (GIDA…RYKR). At 103-668 (DASESDELLN…QPVLEPSYRE (566 aa)) the chain is on the lumenal side. The Peptidase S8 domain occupies 128–440 (QWHIFNSNNP…FGKLDASKFV (313 aa)). A glycan (N-linked (GlcNAc...) asparagine) is linked at Asn155. Catalysis depends on charge relay system residues Asp162 and His200. 2 disulfide bridges follow: Cys216–Cys363 and Cys308–Cys338. The Charge relay system role is filled by Ser371. The P/Homo B domain maps to 449 to 588 (VNPQTWLIAP…QLALWGESEN (140 aa)). Residues Asn463, Asn471, and Asn620 are each glycosylated (N-linked (GlcNAc...) asparagine). The chain crosses the membrane as a helical span at residues 669 to 693 (IVAFITFFLLFAFIFVAVIWTWISA). The Cytoplasmic portion of the chain corresponds to 694–709 (FWKAKAPPPLSQQEIA).

The protein belongs to the peptidase S8 family. Furin subfamily. The cofactor is Ca(2+). In terms of processing, N-glycosylated.

The protein resides in the golgi apparatus. It is found in the trans-Golgi network membrane. Its function is as follows. Membrane-bound, subtilisin-like serine protease that processes the P-factor precursor and other precursor proteins. Essential for cell viability. Cleaves substrate on the C-terminal side of dibasic residues. The chain is Dibasic-processing endoprotease (krp1) from Schizosaccharomyces pombe (strain 972 / ATCC 24843) (Fission yeast).